The primary structure comprises 103 residues: Putative membrane protein insertion efficiency factor (103 aa).

Residues 68-103 (HEGGYDPVPLAKQDAKPENNSESESLLNQPTETKSL) are disordered. Positions 87 to 103 (NSESESLLNQPTETKSL) are enriched in polar residues.

The protein belongs to the UPF0161 family.

It localises to the cell inner membrane. Functionally, could be involved in insertion of integral membrane proteins into the membrane. The polypeptide is Putative membrane protein insertion efficiency factor (Idiomarina loihiensis (strain ATCC BAA-735 / DSM 15497 / L2-TR)).